The following is a 139-amino-acid chain: YIRRVRQGSIYSLLVESQQWCKLTLTLLLLLALLTRCTLSETLCGSELVDTLQFVCDDRGFFFVPQHVPPRRGAHRRSRARKGIVEECCFKGCSLRLLEMYCARPSKAERDVARPRQRPHRASQHSRRGSQSRGRGRSR.

The first 38 residues, 1 to 38, serve as a signal peptide directing secretion; the sequence is YIRRVRQGSIYSLLVESQQWCKLTLTLLLLLALLTRCT. Positions 39-67 are b; the sequence is LSETLCGSELVDTLQFVCDDRGFFFVPQH. The tract at residues 68 to 82 is c; it reads VPPRRGAHRRSRARK. The interval 83–103 is a; the sequence is GIVEECCFKGCSLRLLEMYCA. Positions 104–113 are d; sequence RPSKAERDVA. The segment at 108–139 is disordered; that stretch reads AERDVARPRQRPHRASQHSRRGSQSRGRGRSR. The tract at residues 114–139 is e; the sequence is RPRQRPHRASQHSRRGSQSRGRGRSR. Residues 115 to 139 are compositionally biased toward basic residues; that stretch reads PRQRPHRASQHSRRGSQSRGRGRSR.

The protein belongs to the insulin family.

The protein resides in the secreted. Functionally, the insulin-like growth factors, isolated from plasma, are structurally and functionally related to insulin but have a much higher growth-promoting activity. The chain is Insulin-like growth factor from Myxine glutinosa (Atlantic hagfish).